The chain runs to 248 residues: Probable transcriptional regulatory protein HCH_04926 (248 aa).

It belongs to the TACO1 family.

The protein resides in the cytoplasm. The chain is Probable transcriptional regulatory protein HCH_04926 from Hahella chejuensis (strain KCTC 2396).